The sequence spans 276 residues: Diaminopimelate epimerase (276 aa).

Asn-13, Gln-46, and Asn-66 together coordinate substrate. Cys-75 functions as the Proton donor in the catalytic mechanism. Substrate is bound by residues 76-77 (GN), Asn-159, Asn-192, and 210-211 (ER). Cys-219 (proton acceptor) is an active-site residue. A substrate-binding site is contributed by 220–221 (GT).

It belongs to the diaminopimelate epimerase family. In terms of assembly, homodimer.

The protein localises to the cytoplasm. The enzyme catalyses (2S,6S)-2,6-diaminopimelate = meso-2,6-diaminopimelate. The protein operates within amino-acid biosynthesis; L-lysine biosynthesis via DAP pathway; DL-2,6-diaminopimelate from LL-2,6-diaminopimelate: step 1/1. Functionally, catalyzes the stereoinversion of LL-2,6-diaminopimelate (L,L-DAP) to meso-diaminopimelate (meso-DAP), a precursor of L-lysine and an essential component of the bacterial peptidoglycan. The polypeptide is Diaminopimelate epimerase (Ectopseudomonas mendocina (strain ymp) (Pseudomonas mendocina)).